A 111-amino-acid chain; its full sequence is P antigen family member 2 (111 aa).

Residues 1–66 (MSELLRARSQ…NQAVPAFQGP (66 aa)) are disordered. The segment covering 8–24 (RSQSSERGNDQESSQPV) has biased composition (polar residues).

This sequence belongs to the GAGE family.

The sequence is that of P antigen family member 2 (PAGE2) from Homo sapiens (Human).